The chain runs to 104 residues: Pyrimidine/purine nucleoside phosphorylase (104 aa).

It belongs to the nucleoside phosphorylase PpnP family.

The enzyme catalyses a purine D-ribonucleoside + phosphate = a purine nucleobase + alpha-D-ribose 1-phosphate. The catalysed reaction is adenosine + phosphate = alpha-D-ribose 1-phosphate + adenine. It catalyses the reaction cytidine + phosphate = cytosine + alpha-D-ribose 1-phosphate. It carries out the reaction guanosine + phosphate = alpha-D-ribose 1-phosphate + guanine. The enzyme catalyses inosine + phosphate = alpha-D-ribose 1-phosphate + hypoxanthine. The catalysed reaction is thymidine + phosphate = 2-deoxy-alpha-D-ribose 1-phosphate + thymine. It catalyses the reaction uridine + phosphate = alpha-D-ribose 1-phosphate + uracil. It carries out the reaction xanthosine + phosphate = alpha-D-ribose 1-phosphate + xanthine. Its function is as follows. Catalyzes the phosphorolysis of diverse nucleosides, yielding D-ribose 1-phosphate and the respective free bases. Can use uridine, adenosine, guanosine, cytidine, thymidine, inosine and xanthosine as substrates. Also catalyzes the reverse reactions. The chain is Pyrimidine/purine nucleoside phosphorylase from Herminiimonas arsenicoxydans.